Here is a 506-residue protein sequence, read N- to C-terminus: Apolipoprotein N-acyltransferase (506 aa).

The next 6 helical transmembrane spans lie at 26–46 (FAPY…LILI), 66–86 (FASG…MPLA), 89–109 (LFLM…FTWS), 113–133 (FFAK…WLIA), 166–186 (GVEL…YAVI), and 192–212 (MLLI…WDWV). The region spanning 225 to 471 (IQGNVDQNLK…TAVLRAELTP (247 aa)) is the CN hydrolase domain. The active-site Proton acceptor is the Glu264. Lys330 is an active-site residue. Catalysis depends on Cys382, which acts as the Nucleophile. The chain crosses the membrane as a helical span at residues 479–499 (HQLGSWPLYIWVALSLALAWW).

It belongs to the CN hydrolase family. Apolipoprotein N-acyltransferase subfamily.

It localises to the cell inner membrane. The enzyme catalyses N-terminal S-1,2-diacyl-sn-glyceryl-L-cysteinyl-[lipoprotein] + a glycerophospholipid = N-acyl-S-1,2-diacyl-sn-glyceryl-L-cysteinyl-[lipoprotein] + a 2-acyl-sn-glycero-3-phospholipid + H(+). It functions in the pathway protein modification; lipoprotein biosynthesis (N-acyl transfer). Functionally, catalyzes the phospholipid dependent N-acylation of the N-terminal cysteine of apolipoprotein, the last step in lipoprotein maturation. The sequence is that of Apolipoprotein N-acyltransferase from Vibrio vulnificus (strain CMCP6).